We begin with the raw amino-acid sequence, 298 residues long: MQLEKMITEGSNAASAEIDRVSTLEMCRIINDEDKTVPLAVERVLPDIAAAIDVIHAQVSGGGRLIYLGAGTSGRLGILDASECPPTYGVKPGLVVGLIAGGEYAIQHAVEGAEDSREGGVNDLKNIGLTAQDVVVGIAASGRTPYVIAGLEYARQLGCRTVGISCNPGSAVSTTAEFAITPVVGAEVVTGSSRMKAGTAQKLVLNMLSTGLMIKSGKVFGNLMVDVVATNEKLHVRQVNIVKNATGCNAEQAEAALIACERNCKTAIVMVLKNLDAAEAKKRLDQHGGFIRQVLDKE.

The region spanning 55–218 is the SIS domain; sequence IHAQVSGGGR…STGLMIKSGK (164 aa). The Proton donor role is filled by Glu83. Glu114 is an active-site residue.

The protein belongs to the GCKR-like family. MurNAc-6-P etherase subfamily. As to quaternary structure, homodimer.

The enzyme catalyses N-acetyl-D-muramate 6-phosphate + H2O = N-acetyl-D-glucosamine 6-phosphate + (R)-lactate. It functions in the pathway amino-sugar metabolism; 1,6-anhydro-N-acetylmuramate degradation. The protein operates within amino-sugar metabolism; N-acetylmuramate degradation. It participates in cell wall biogenesis; peptidoglycan recycling. In terms of biological role, specifically catalyzes the cleavage of the D-lactyl ether substituent of MurNAc 6-phosphate, producing GlcNAc 6-phosphate and D-lactate. Together with AnmK, is also required for the utilization of anhydro-N-acetylmuramic acid (anhMurNAc) either imported from the medium or derived from its own cell wall murein, and thus plays a role in cell wall recycling. The protein is N-acetylmuramic acid 6-phosphate etherase of Escherichia coli O157:H7 (strain EC4115 / EHEC).